The sequence spans 127 residues: Holo-[acyl-carrier-protein] synthase (127 aa).

Mg(2+) is bound by residues aspartate 9 and glutamate 58.

The protein belongs to the P-Pant transferase superfamily. AcpS family. The cofactor is Mg(2+).

The protein localises to the cytoplasm. The enzyme catalyses apo-[ACP] + CoA = holo-[ACP] + adenosine 3',5'-bisphosphate + H(+). Functionally, transfers the 4'-phosphopantetheine moiety from coenzyme A to a Ser of acyl-carrier-protein. The polypeptide is Holo-[acyl-carrier-protein] synthase (Shewanella sp. (strain MR-7)).